A 202-amino-acid chain; its full sequence is Na(+)-translocating NADH-quinone reductase subunit E (202 aa).

A run of 6 helical transmembrane segments spans residues 11–31, 35–55, 81–101, 114–134, 144–164, and 180–200; these read SVFI…FIAV, IETA…TVPA, FIAL…LEMV, GIFL…LFMI, VVYG…MAGV, and LGIT…FSGI.

It belongs to the NqrDE/RnfAE family. In terms of assembly, composed of six subunits; NqrA, NqrB, NqrC, NqrD, NqrE and NqrF.

It is found in the cell inner membrane. The catalysed reaction is a ubiquinone + n Na(+)(in) + NADH + H(+) = a ubiquinol + n Na(+)(out) + NAD(+). In terms of biological role, NQR complex catalyzes the reduction of ubiquinone-1 to ubiquinol by two successive reactions, coupled with the transport of Na(+) ions from the cytoplasm to the periplasm. NqrA to NqrE are probably involved in the second step, the conversion of ubisemiquinone to ubiquinol. The polypeptide is Na(+)-translocating NADH-quinone reductase subunit E (Methylococcus capsulatus (strain ATCC 33009 / NCIMB 11132 / Bath)).